Reading from the N-terminus, the 368-residue chain is GLABROUS1 enhancer-binding protein-like (368 aa).

Residues 1–123 (MAPKKAEEVV…TSDTEHVKKP (123 aa)) form a disordered region. Acidic residues predominate over residues 17-31 (SEEEESGSSGEESES). The span at 35–47 (VPKKVESSQKPES) shows a compositional bias: basic and acidic residues. Polar residues predominate over residues 84-97 (TSGSAATVPESSTA). A compositionally biased stretch (basic and acidic residues) spans 100 to 123 (PLKEAAPEAIKKQKTSDTEHVKKP).

Belongs to the GeBP family. As to quaternary structure, mono-, di- and oligomers. Associated with the Mediator complex. Interacts with MED6. Interacts with MED10A, MED28 and MED32. Interacts with DEK3.

It is found in the nucleus. In terms of biological role, transcription factor that binds promoters containing the CryR2 element, 5'-ACATAWCT-3'. The DNA-binding activity is decreased upon direct physical interaction with the mediator subunits and is modulated by redox conditions. The oxidized protein is the preferential binding form. The chain is GLABROUS1 enhancer-binding protein-like from Arabidopsis thaliana (Mouse-ear cress).